Consider the following 118-residue polypeptide: uncharacterized protein (118 aa).

This is an uncharacterized protein from Kitasatospora aureofaciens (Streptomyces aureofaciens).